A 467-amino-acid polypeptide reads, in one-letter code: Mitogen-activated protein kinase kinase kinase 8 (467 aa).

Position 80 is a phosphothreonine (Thr80). Phosphoserine is present on residues Ser138 and Ser141. ATP contacts are provided by residues 144–152 and Lys167; that span reads VPRGAFGKV. Residues 146 to 388 enclose the Protein kinase domain; the sequence is RGAFGKVYLA…AADLLKHEAL (243 aa). The active-site Proton acceptor is Asp253. Thr290 is modified (phosphothreonine). A phosphoserine mark is found at Ser400 and Ser443.

Belongs to the protein kinase superfamily. STE Ser/Thr protein kinase family. MAP kinase kinase kinase subfamily. Forms a ternary complex with NFKB1/p105 and TNIP2. Interacts with NFKB1; the interaction increases the stability of MAP3K8 but inhibits its MEK phosphorylation activity, whereas loss of interaction following LPS stimulation leads to its degradation. Interacts with CD40 and TRAF6; the interaction is required for ERK activation. Interacts with KSR2; the interaction inhibits ERK and NF-kappa-B activation. The cofactor is Mg(2+). In terms of processing, autophosphorylated. As to expression, expressed in spleen, thymus, liver and lung.

The protein resides in the cytoplasm. The enzyme catalyses L-seryl-[protein] + ATP = O-phospho-L-seryl-[protein] + ADP + H(+). It carries out the reaction L-threonyl-[protein] + ATP = O-phospho-L-threonyl-[protein] + ADP + H(+). In terms of biological role, required for lipopolysaccharide (LPS)-induced, TLR4-mediated activation of the MAPK/ERK pathway in macrophages, thus being critical for production of the pro-inflammatory cytokine TNF-alpha (TNF) during immune responses. Involved in the regulation of T-helper cell differentiation and IFNG expression in T-cells. Involved in mediating host resistance to bacterial infection through negative regulation of type I interferon (IFN) production. Transduces CD40 and TNFRSF1A signals that activate ERK in B-cells and macrophages, and thus may play a role in the regulation of immunoglobulin production. May also play a role in the transduction of TNF signals that activate JNK and NF-kappa-B in some cell types. In adipocytes, activates MAPK/ERK pathway in an IKBKB-dependent manner in response to IL1B and TNF, but not insulin, leading to induction of lipolysis. Plays a role in the cell cycle. The polypeptide is Mitogen-activated protein kinase kinase kinase 8 (Map3k8) (Rattus norvegicus (Rat)).